Reading from the N-terminus, the 160-residue chain is Arginine repressor (160 aa).

The protein belongs to the ArgR family.

Its subcellular location is the cytoplasm. The protein operates within amino-acid biosynthesis; L-arginine biosynthesis [regulation]. Regulates arginine biosynthesis genes. In Anaeromyxobacter dehalogenans (strain 2CP-1 / ATCC BAA-258), this protein is Arginine repressor.